Here is a 177-residue protein sequence, read N- to C-terminus: Large ribosomal subunit protein uL6 (177 aa).

Belongs to the universal ribosomal protein uL6 family. As to quaternary structure, part of the 50S ribosomal subunit.

In terms of biological role, this protein binds to the 23S rRNA, and is important in its secondary structure. It is located near the subunit interface in the base of the L7/L12 stalk, and near the tRNA binding site of the peptidyltransferase center. The polypeptide is Large ribosomal subunit protein uL6 (Pseudomonas fluorescens (strain SBW25)).